A 1400-amino-acid chain; its full sequence is DNA-directed RNA polymerase subunit beta' (1400 aa).

Residues Cys-71, Cys-73, Cys-86, and Cys-89 each coordinate Zn(2+). Positions 462, 464, and 466 each coordinate Mg(2+). The Zn(2+) site is built by Cys-810, Cys-884, Cys-891, and Cys-894.

Belongs to the RNA polymerase beta' chain family. The RNAP catalytic core consists of 2 alpha, 1 beta, 1 beta' and 1 omega subunit. When a sigma factor is associated with the core the holoenzyme is formed, which can initiate transcription. Requires Mg(2+) as cofactor. Zn(2+) serves as cofactor.

It catalyses the reaction RNA(n) + a ribonucleoside 5'-triphosphate = RNA(n+1) + diphosphate. Functionally, DNA-dependent RNA polymerase catalyzes the transcription of DNA into RNA using the four ribonucleoside triphosphates as substrates. The chain is DNA-directed RNA polymerase subunit beta' from Rhodopseudomonas palustris (strain TIE-1).